A 405-amino-acid polypeptide reads, in one-letter code: Dihydrolipoyllysine-residue succinyltransferase component of 2-oxoglutarate dehydrogenase complex (405 aa).

In terms of domain architecture, Lipoyl-binding spans 3–78 (SVDILVPDLP…TSRQILGRLR (76 aa)). Residue lysine 44 is modified to N6-lipoyllysine. The segment at 75 to 111 (GRLREGNSAGKETSAKSEEKASTPAQRQQASLEEQNN) is disordered. The segment covering 97 to 111 (TPAQRQQASLEEQNN) has biased composition (polar residues). A Peripheral subunit-binding (PSBD) domain is found at 113 to 150 (ALSPAIRRLLAEHNLDASAIKGTGVGGRLTREDVEKHL). Lysine 148 carries the post-translational modification N6-acetyllysine. A compositionally biased stretch (low complexity) spans 153-173 (APAKESAPAAAAPAAQPALAA). Residues 153–178 (APAKESAPAAAAPAAQPALAARSEKR) are disordered. Catalysis depends on residues histidine 376 and aspartate 380.

This sequence belongs to the 2-oxoacid dehydrogenase family. Forms a 24-polypeptide structural core with octahedral symmetry. Part of the 2-oxoglutarate dehydrogenase (OGDH) complex composed of E1 (2-oxoglutarate dehydrogenase), E2 (dihydrolipoamide succinyltransferase) and E3 (dihydrolipoamide dehydrogenase); the complex contains multiple copies of the three enzymatic components (E1, E2 and E3). Interacts with SucA (via N-terminus), the E1 component of OGDH complex. (R)-lipoate serves as cofactor.

It catalyses the reaction N(6)-[(R)-dihydrolipoyl]-L-lysyl-[protein] + succinyl-CoA = N(6)-[(R)-S(8)-succinyldihydrolipoyl]-L-lysyl-[protein] + CoA. It functions in the pathway amino-acid degradation; L-lysine degradation via saccharopine pathway; glutaryl-CoA from L-lysine: step 6/6. In terms of biological role, E2 component of the 2-oxoglutarate dehydrogenase (OGDH) complex which catalyzes the second step in the conversion of 2-oxoglutarate to succinyl-CoA and CO(2). This Escherichia coli O157:H7 protein is Dihydrolipoyllysine-residue succinyltransferase component of 2-oxoglutarate dehydrogenase complex (sucB).